Reading from the N-terminus, the 359-residue chain is Phospho-N-acetylmuramoyl-pentapeptide-transferase (359 aa).

10 helical membrane-spanning segments follow: residues 3-23, 55-75, 80-100, 117-137, 156-176, 187-207, 231-251, 255-275, 280-300, and 334-354; these read QIMI…PALI, VAIL…GLAF, ITAS…VGFL, TAKT…VLQF, IATV…VVSA, LDGL…LITF, LALI…WNAA, IFMG…LSVT, ILAV…VLQI, and FWLL…GEWL.

It belongs to the glycosyltransferase 4 family. MraY subfamily. The cofactor is Mg(2+).

Its subcellular location is the cell inner membrane. The catalysed reaction is UDP-N-acetyl-alpha-D-muramoyl-L-alanyl-gamma-D-glutamyl-meso-2,6-diaminopimeloyl-D-alanyl-D-alanine + di-trans,octa-cis-undecaprenyl phosphate = di-trans,octa-cis-undecaprenyl diphospho-N-acetyl-alpha-D-muramoyl-L-alanyl-D-glutamyl-meso-2,6-diaminopimeloyl-D-alanyl-D-alanine + UMP. The protein operates within cell wall biogenesis; peptidoglycan biosynthesis. In terms of biological role, catalyzes the initial step of the lipid cycle reactions in the biosynthesis of the cell wall peptidoglycan: transfers peptidoglycan precursor phospho-MurNAc-pentapeptide from UDP-MurNAc-pentapeptide onto the lipid carrier undecaprenyl phosphate, yielding undecaprenyl-pyrophosphoryl-MurNAc-pentapeptide, known as lipid I. In Mycobacterium marinum (strain ATCC BAA-535 / M), this protein is Phospho-N-acetylmuramoyl-pentapeptide-transferase.